A 459-amino-acid polypeptide reads, in one-letter code: NADH-ubiquinone oxidoreductase chain 4 (459 aa).

12 helical membrane passes run 20-42 (PKWL…LTLF), 61-81 (MIST…IIAS), 103-123 (LQAL…YIMF), 148-168 (IYFL…LLYL), 194-214 (FLWV…GVHL), 224-244 (PVAG…YGMI), 257-277 (LAYP…SICM), 284-303 (SLIA…GILI), 307-329 (WGFT…LFCL), 350-370 (IILP…MALP), 392-414 (TILL…YMSS), and 435-455 (LLLT…ELIW).

It belongs to the complex I subunit 4 family.

Its subcellular location is the mitochondrion membrane. It catalyses the reaction a ubiquinone + NADH + 5 H(+)(in) = a ubiquinol + NAD(+) + 4 H(+)(out). Its function is as follows. Core subunit of the mitochondrial membrane respiratory chain NADH dehydrogenase (Complex I) that is believed to belong to the minimal assembly required for catalysis. Complex I functions in the transfer of electrons from NADH to the respiratory chain. The immediate electron acceptor for the enzyme is believed to be ubiquinone. This Polypterus ornatipinnis (Ornate bichir) protein is NADH-ubiquinone oxidoreductase chain 4 (MT-ND4).